The primary structure comprises 106 residues: ATP synthase-coupling factor 6, mitochondrial (106 aa).

This sequence belongs to the eukaryotic ATPase subunit F6 family. As to quaternary structure, F-type ATPases have 2 components, CF(1) - the catalytic core - and CF(0) - the membrane proton channel. CF(0) seems to have nine subunits: a, b, c, d, e, f, g, F6 and 8 (or A6L).

The protein resides in the mitochondrion. It is found in the mitochondrion inner membrane. Functionally, mitochondrial membrane ATP synthase (F(1)F(0) ATP synthase or Complex V) produces ATP from ADP in the presence of a proton gradient across the membrane which is generated by electron transport complexes of the respiratory chain. F-type ATPases consist of two structural domains, F(1) - containing the extramembraneous catalytic core and F(0) - containing the membrane proton channel, linked together by a central stalk and a peripheral stalk. During catalysis, ATP synthesis in the catalytic domain of F(1) is coupled via a rotary mechanism of the central stalk subunits to proton translocation. Part of the complex F(0) domain and the peripheric stalk, which acts as a stator to hold the catalytic alpha(3)beta(3) subcomplex and subunit a/ATP6 static relative to the rotary elements. The protein is ATP synthase-coupling factor 6, mitochondrial of Drosophila melanogaster (Fruit fly).